The primary structure comprises 984 residues: Putative formate dehydrogenase SA2102 (984 aa).

A 2Fe-2S ferredoxin-type domain is found at 3-79 (EHLVVTLDGK…PMTVNTVNND (77 aa)). 4 residues coordinate [2Fe-2S] cluster: C37, C48, C51, and C63. In terms of domain architecture, 4Fe-4S His(Cys)3-ligated-type spans 79-119 (DVKDAQKEALDRILEKHMLYCTVCDYNNGDCEIHNTMDAWG). Positions 95, 99, 102, 109, 147, 150, 153, 157, 190, 193, 196, 200, 264, 267, 271, and 299 each coordinate [4Fe-4S] cluster. 2 consecutive 4Fe-4S ferredoxin-type domains span residues 138–165 (PFYR…VNET) and 181–211 (NDVP…VNME). Residues 252 to 984 (MRKERIKKTK…YVFPGNQVDK (733 aa)) form a formate dehydrogenase region. Residues 257–313 (IKKTKTVCTYCGVGCSFEVWTKDREILKVQPSHDSPANKIATCVKGKFSWGHINSDQ) enclose the 4Fe-4S Mo/W bis-MGD-type domain.

This sequence in the C-terminal section; belongs to the prokaryotic molybdopterin-containing oxidoreductase family. [2Fe-2S] cluster serves as cofactor. It depends on [4Fe-4S] cluster as a cofactor. Requires Mo-bis(molybdopterin guanine dinucleotide) as cofactor.

It catalyses the reaction formate + NAD(+) = CO2 + NADH. This chain is Putative formate dehydrogenase SA2102, found in Staphylococcus aureus (strain N315).